The following is a 300-amino-acid chain: Ribosomal RNA small subunit methyltransferase H (300 aa).

Residues 43-45 (AGH), Asp60, Asp105, and Gln112 each bind S-adenosyl-L-methionine.

Belongs to the methyltransferase superfamily. RsmH family.

The protein localises to the cytoplasm. It catalyses the reaction cytidine(1402) in 16S rRNA + S-adenosyl-L-methionine = N(4)-methylcytidine(1402) in 16S rRNA + S-adenosyl-L-homocysteine + H(+). Specifically methylates the N4 position of cytidine in position 1402 (C1402) of 16S rRNA. In Deinococcus deserti (strain DSM 17065 / CIP 109153 / LMG 22923 / VCD115), this protein is Ribosomal RNA small subunit methyltransferase H.